We begin with the raw amino-acid sequence, 338 residues long: MPSPIRVAILGATGAVGTELLELLASRNFPLAELKLLASPRSAGKTLEFQGEKLPIQAVDGSAFKGCDLVLASAGGSTSKRWAEEITKAGAVMVDNSSAFRMVPEVPLVVPEINPEAAQNHQGIIANPNCTTILMGVAIYPLHQLQPIKRIVVATYQSASGAGAMAMEEVKHQSRDILEGKIPQAEILPYPLAFNLFPHNSPITANHYCEEEMKMVQETRKIFAAEDIRITATCVRVPVLRAHSEAVNLEFATPFPVELAKTAIAKAPGVKLVEDWQKNYFPMPMDATGQDDVLVGRIRQDISHPNGLDLWLCGDQIRKGAALNAVQIAELLVERGWL.

Residues 13–16 (TGAV) and 41–42 (RS) contribute to the NADP(+) site. Residue Arg-101 participates in phosphate binding. Cys-130 (acyl-thioester intermediate) is an active-site residue. Gln-157 contacts substrate. 160-161 (SG) provides a ligand contact to NADP(+). Lys-214 serves as a coordination point for phosphate. Arg-236 contributes to the substrate binding site. His-243 functions as the Proton acceptor in the catalytic mechanism. NADP(+) is bound at residue Gln-316.

It belongs to the aspartate-semialdehyde dehydrogenase family. In terms of assembly, homodimer.

It catalyses the reaction L-aspartate 4-semialdehyde + phosphate + NADP(+) = 4-phospho-L-aspartate + NADPH + H(+). Its pathway is amino-acid biosynthesis; L-lysine biosynthesis via DAP pathway; (S)-tetrahydrodipicolinate from L-aspartate: step 2/4. The protein operates within amino-acid biosynthesis; L-methionine biosynthesis via de novo pathway; L-homoserine from L-aspartate: step 2/3. It functions in the pathway amino-acid biosynthesis; L-threonine biosynthesis; L-threonine from L-aspartate: step 2/5. Catalyzes the NADPH-dependent formation of L-aspartate-semialdehyde (L-ASA) by the reductive dephosphorylation of L-aspartyl-4-phosphate. This Synechocystis sp. (strain ATCC 27184 / PCC 6803 / Kazusa) protein is Aspartate-semialdehyde dehydrogenase (asd).